The sequence spans 274 residues: Pyrroline-5-carboxylate reductase 3 (274 aa).

Residue A2 is modified to N-acetylalanine.

Belongs to the pyrroline-5-carboxylate reductase family. As to quaternary structure, homodecamer; composed of 5 homodimers.

It is found in the cytoplasm. It carries out the reaction L-proline + NADP(+) = (S)-1-pyrroline-5-carboxylate + NADPH + 2 H(+). The catalysed reaction is L-proline + NAD(+) = (S)-1-pyrroline-5-carboxylate + NADH + 2 H(+). Its pathway is amino-acid biosynthesis; L-proline biosynthesis; L-proline from L-glutamate 5-semialdehyde: step 1/1. Its function is as follows. Oxidoreductase that catalyzes the last step in proline biosynthesis, which corresponds to the reduction of pyrroline-5-carboxylate (P5C) to L-proline using NAD(P)H. Proline is synthesized from either glutamate or ornithine; both are converted to P5C, and then to proline via pyrroline-5-carboxylate reductases (PYCRs). PYCR3 is exclusively linked to the biosynthesis of proline from ornithine. This chain is Pyrroline-5-carboxylate reductase 3, found in Rattus norvegicus (Rat).